The chain runs to 405 residues: L-rhamnonate dehydratase (405 aa).

2 residues coordinate substrate: histidine 33 and arginine 59. The Mg(2+) site is built by aspartate 226, glutamate 252, and glutamate 280. The active-site Proton acceptor is histidine 329. Glutamate 349 is a substrate binding site.

This sequence belongs to the mandelate racemase/muconate lactonizing enzyme family. RhamD subfamily. In terms of assembly, homooctamer; tetramer of dimers. It depends on Mg(2+) as a cofactor.

It catalyses the reaction L-rhamnonate = 2-dehydro-3-deoxy-L-rhamnonate + H2O. Functionally, catalyzes the dehydration of L-rhamnonate to 2-keto-3-deoxy-L-rhamnonate (KDR). This chain is L-rhamnonate dehydratase, found in Escherichia coli O45:K1 (strain S88 / ExPEC).